We begin with the raw amino-acid sequence, 533 residues long: Cytochrome P450 9e2 (533 aa).

Residue cysteine 475 participates in heme binding.

This sequence belongs to the cytochrome P450 family. Requires heme as cofactor.

Its subcellular location is the endoplasmic reticulum membrane. The protein resides in the microsome membrane. This chain is Cytochrome P450 9e2 (CYP9E2), found in Blattella germanica (German cockroach).